The sequence spans 186 residues: Large ribosomal subunit protein uL10 (186 aa).

The protein belongs to the universal ribosomal protein uL10 family. As to quaternary structure, part of the ribosomal stalk of the 50S ribosomal subunit. The N-terminus interacts with L11 and the large rRNA to form the base of the stalk. The C-terminus forms an elongated spine to which L12 dimers bind in a sequential fashion forming a multimeric L10(L12)X complex.

Forms part of the ribosomal stalk, playing a central role in the interaction of the ribosome with GTP-bound translation factors. The protein is Large ribosomal subunit protein uL10 (rplJ) of Streptomyces virginiae (Streptomyces cinnamonensis).